Consider the following 278-residue polypeptide: DNA repair protein RecO (278 aa).

Residues 1–12 (MGTNDALTSTED) are compositionally biased toward polar residues. The segment at 1 to 41 (MGTNDALTSTEDAVTAGANDAPLPAPPEPPRKARRATSRTS) is disordered.

This sequence belongs to the RecO family.

Functionally, involved in DNA repair and RecF pathway recombination. The protein is DNA repair protein RecO of Burkholderia orbicola (strain AU 1054).